A 258-amino-acid polypeptide reads, in one-letter code: MEEQGTGIRVEAMTAEYAQQARAWAERLGLPLQDDTAAFAVQVGVDGLQIQQLGPQAPGPVRVDFVEGQAAHRRQFGGGNGQMIAKAVGIAQGIRPQVLDATAGLGKDAFVLASLGCQMTLIERQPLIAALLEDGLARARADEEVGPIVGRMRLLTGNAIERMRAWEGEAPQVIYLDPMFPHRDKSALVKKEMRVFRPLVGDDLDAPALLEAALALASHRVVVKRPRKAPIIDGPKPSHSLEGKSSRYDIYPKKALKA.

S-adenosyl-L-methionine-binding positions include 123-124 (ER) and aspartate 177. The segment at 232–258 (IDGPKPSHSLEGKSSRYDIYPKKALKA) is disordered. The segment covering 239–252 (HSLEGKSSRYDIYP) has biased composition (basic and acidic residues).

This sequence belongs to the methyltransferase superfamily. RsmJ family.

It localises to the cytoplasm. The enzyme catalyses guanosine(1516) in 16S rRNA + S-adenosyl-L-methionine = N(2)-methylguanosine(1516) in 16S rRNA + S-adenosyl-L-homocysteine + H(+). In terms of biological role, specifically methylates the guanosine in position 1516 of 16S rRNA. The sequence is that of Ribosomal RNA small subunit methyltransferase J from Pseudomonas putida (strain ATCC 47054 / DSM 6125 / CFBP 8728 / NCIMB 11950 / KT2440).